We begin with the raw amino-acid sequence, 171 residues long: UPF0398 protein STER_0279 (171 aa).

It belongs to the UPF0398 family.

In Streptococcus thermophilus (strain ATCC BAA-491 / LMD-9), this protein is UPF0398 protein STER_0279.